A 361-amino-acid polypeptide reads, in one-letter code: Phosphoserine aminotransferase (361 aa).

R43 contributes to the L-glutamate binding site. 4 residues coordinate pyridoxal 5'-phosphate: W103, T153, D173, and Q196. K197 is subject to N6-(pyridoxal phosphate)lysine. Residue 238-239 coordinates pyridoxal 5'-phosphate; the sequence is NT.

Belongs to the class-V pyridoxal-phosphate-dependent aminotransferase family. SerC subfamily. As to quaternary structure, homodimer. Requires pyridoxal 5'-phosphate as cofactor.

It is found in the cytoplasm. It catalyses the reaction O-phospho-L-serine + 2-oxoglutarate = 3-phosphooxypyruvate + L-glutamate. The enzyme catalyses 4-(phosphooxy)-L-threonine + 2-oxoglutarate = (R)-3-hydroxy-2-oxo-4-phosphooxybutanoate + L-glutamate. It functions in the pathway amino-acid biosynthesis; L-serine biosynthesis; L-serine from 3-phospho-D-glycerate: step 2/3. Its pathway is cofactor biosynthesis; pyridoxine 5'-phosphate biosynthesis; pyridoxine 5'-phosphate from D-erythrose 4-phosphate: step 3/5. Catalyzes the reversible conversion of 3-phosphohydroxypyruvate to phosphoserine and of 3-hydroxy-2-oxo-4-phosphonooxybutanoate to phosphohydroxythreonine. This is Phosphoserine aminotransferase from Hahella chejuensis (strain KCTC 2396).